The chain runs to 103 residues: Large ribosomal subunit protein uL24 (103 aa).

Belongs to the universal ribosomal protein uL24 family. Part of the 50S ribosomal subunit.

In terms of biological role, one of two assembly initiator proteins, it binds directly to the 5'-end of the 23S rRNA, where it nucleates assembly of the 50S subunit. One of the proteins that surrounds the polypeptide exit tunnel on the outside of the subunit. This chain is Large ribosomal subunit protein uL24, found in Pediococcus pentosaceus (strain ATCC 25745 / CCUG 21536 / LMG 10740 / 183-1w).